The following is a 112-amino-acid chain: ATP-dependent Clp protease adapter protein ClpS (112 aa).

This sequence belongs to the ClpS family. As to quaternary structure, binds to the N-terminal domain of the chaperone ClpA.

Involved in the modulation of the specificity of the ClpAP-mediated ATP-dependent protein degradation. The chain is ATP-dependent Clp protease adapter protein ClpS from Rhodococcus jostii (strain RHA1).